The following is a 343-amino-acid chain: Heat-inducible transcription repressor HrcA (343 aa).

This sequence belongs to the HrcA family.

In terms of biological role, negative regulator of class I heat shock genes (grpE-dnaK-dnaJ and groELS operons). Prevents heat-shock induction of these operons. The polypeptide is Heat-inducible transcription repressor HrcA (Natranaerobius thermophilus (strain ATCC BAA-1301 / DSM 18059 / JW/NM-WN-LF)).